A 1081-amino-acid polypeptide reads, in one-letter code: Teashirt homolog 3 (1081 aa).

Disordered regions lie at residues 25–104 (LVED…EVQV), 141–161 (PSSE…SSCG), and 238–257 (HYRD…WSKP). Acidic residues predominate over residues 26-37 (VEDDVEPEEQAA). The segment covering 68-87 (SSHEMDSESHISETSDRMAD) has biased composition (basic and acidic residues). 2 consecutive C2H2-type zinc fingers follow at residues 214–238 (FRCK…ETGH) and 275–299 (LKCM…KTKH). Residues 238–247 (HYRDDNHETD) show a composition bias toward basic and acidic residues. The tract at residues 325–346 (SLELELPSSPDSTGGTPKATLS) is disordered. The segment at 387–410 (KCMECGSSHDTLQELTAHMMVTGH) adopts a C2H2-type 3; atypical zinc-finger fold. Positions 474–491 (VDKEKAVPDEKPKEREKP) are enriched in basic and acidic residues. Disordered regions lie at residues 474 to 499 (VDKE…EKYD), 626 to 699 (EKMK…KPLS), 792 to 824 (LTKG…TVTT), and 855 to 897 (TESH…RQSN). Residues 606–630 (NFHAMEELVKKVTEKVAKVEEKMKE) adopt a coiled-coil conformation. Positions 660–670 (SDGSFKSQENS) are enriched in polar residues. Ser682 carries the post-translational modification Phosphoserine. Low complexity-rich tracts occupy residues 800-824 (GCSL…TVTT) and 856-869 (ESHT…SSIS). The homeobox; atypical DNA-binding region spans 891–961 (RKGRQSNWNP…NVKYQLRRTG (71 aa)). C2H2-type zinc fingers lie at residues 976–998 (FFCN…LESH) and 1041–1064 (YQCK…SKTH).

It belongs to the teashirt C2H2-type zinc-finger protein family. In terms of assembly, interacts (via N-terminus) with HDAC1 and HDAC2; the interaction is direct. Found in a trimeric complex with APBB1 and HDAC1; the interaction between HDAC1 and APBB1 is mediated by TSHZ3. Interacts (via homeobox domain) with APBB1 (via PID domain 1). Expressed in corticostriatal neurons.

The protein localises to the nucleus. It is found in the cell projection. The protein resides in the growth cone. Transcriptional regulator involved in developmental processes. Functions in association with APBB1, SET and HDAC factors as a transcriptional repressor, that inhibits the expression of CASP4. TSHZ3-mediated transcription repression involves the recruitment of histone deacetylases HDAC1 and HDAC2. Associates with chromatin in a region surrounding the CASP4 transcriptional start site(s). Regulates the development of neurons involved in both respiratory rhythm and airflow control. Promotes maintenance of nucleus ambiguus (nA) motoneurons, which govern upper airway function, and establishes a respiratory rhythm generator (RRG) activity compatible with survival at birth. Involved in the differentiation of the proximal uretic smooth muscle cells during developmental processes. Involved in the up-regulation of myocardin, that directs the expression of smooth muscle cells in the proximal ureter. Involved in the modulation of glutamatergic synaptic transmission and long-term synaptic potentiation. The protein is Teashirt homolog 3 (Tshz3) of Mus musculus (Mouse).